The sequence spans 816 residues: S-layer protein (816 aa).

Positions Met-1–Ala-29 are cleaved as a signal peptide. 3 consecutive SLH domains span residues Ala-30–Pro-93, Ser-94–Gly-150, and Pro-152–Val-215. Positions Phe-403 to Leu-480 constitute a BIG2 domain.

The protein localises to the secreted. Its subcellular location is the cell wall. It is found in the S-layer. The S-layer is a paracrystalline mono-layered assembly of proteins which coat the surface of bacteria. The sequence is that of S-layer protein from Bacillus thuringiensis subsp. finitimus.